We begin with the raw amino-acid sequence, 116 residues long: Phosphoribosyl-AMP cyclohydrolase (116 aa).

Residue Asp-78 coordinates Mg(2+). A Zn(2+)-binding site is contributed by Cys-79. Mg(2+) is bound by residues Asp-80 and Asp-82. Cys-95 and Cys-102 together coordinate Zn(2+).

It belongs to the PRA-CH family. In terms of assembly, homodimer. The cofactor is Mg(2+). Requires Zn(2+) as cofactor.

It is found in the cytoplasm. The catalysed reaction is 1-(5-phospho-beta-D-ribosyl)-5'-AMP + H2O = 1-(5-phospho-beta-D-ribosyl)-5-[(5-phospho-beta-D-ribosylamino)methylideneamino]imidazole-4-carboxamide. The protein operates within amino-acid biosynthesis; L-histidine biosynthesis; L-histidine from 5-phospho-alpha-D-ribose 1-diphosphate: step 3/9. Its function is as follows. Catalyzes the hydrolysis of the adenine ring of phosphoribosyl-AMP. The polypeptide is Phosphoribosyl-AMP cyclohydrolase (Acidiphilium cryptum (strain JF-5)).